The chain runs to 563 residues: Arginine--tRNA ligase (563 aa).

The 'HIGH' region motif lies at 123–133 (PNIAKDMHVGH).

Belongs to the class-I aminoacyl-tRNA synthetase family. In terms of assembly, monomer.

The protein localises to the cytoplasm. The enzyme catalyses tRNA(Arg) + L-arginine + ATP = L-arginyl-tRNA(Arg) + AMP + diphosphate. This chain is Arginine--tRNA ligase (argS), found in Chlamydia trachomatis serovar D (strain ATCC VR-885 / DSM 19411 / UW-3/Cx).